Consider the following 290-residue polypeptide: MTYSEKALIFCISVNLKFILVHINFQSKRKEGNICGKKPTYSVRMRASRNAPHEQGGKHISGGERLITYSGLQEAVDGLLHKGFSHSRGIPDFMQIQLESINEPIETIRPLPVAFHQSDTPEKGQAIARKLLQKAGIPPHMIEKAYENIAEYAEARGAVLFDIRAGERIDGRGNRGVRVSRMDWPSHDFQKWAFTHNMPENSRIKEAHAIAAKVCAHPGIIAELCWSDDPDYITGYVAAKKLGYQRIAKMKNAGDESGCRIFFTDGSIDTESCIHFLEKQPVFIQREENI.

It belongs to the BioW family. In terms of assembly, homodimer. Mg(2+) is required as a cofactor.

It carries out the reaction heptanedioate + ATP + CoA = 6-carboxyhexanoyl-CoA + AMP + diphosphate. It functions in the pathway metabolic intermediate metabolism; pimeloyl-CoA biosynthesis; pimeloyl-CoA from pimelate: step 1/1. In terms of biological role, catalyzes the transformation of pimelate into pimeloyl-CoA with concomitant hydrolysis of ATP to AMP. The polypeptide is 6-carboxyhexanoate--CoA ligase (Bacillus amyloliquefaciens (Bacillus velezensis)).